A 362-amino-acid polypeptide reads, in one-letter code: Putative lipoprotein YdaJ (362 aa).

The N-terminal stretch at 1 to 20 (MRHVLIAVILFFLSIGLSAG) is a signal peptide. C21 carries N-palmitoyl cysteine lipidation. C21 carries S-diacylglycerol cysteine lipidation.

The protein localises to the cell membrane. The polypeptide is Putative lipoprotein YdaJ (ydaJ) (Bacillus subtilis (strain 168)).